A 434-amino-acid chain; its full sequence is D-amino acid dehydrogenase (434 aa).

An FAD-binding site is contributed by 3 to 17 (VIVLGSGVIGTTTAY).

This sequence belongs to the DadA oxidoreductase family. Requires FAD as cofactor.

It catalyses the reaction a D-alpha-amino acid + A + H2O = a 2-oxocarboxylate + AH2 + NH4(+). In terms of biological role, oxidative deamination of D-amino acids. The chain is D-amino acid dehydrogenase from Bordetella parapertussis (strain 12822 / ATCC BAA-587 / NCTC 13253).